The sequence spans 627 residues: Neuronal acetylcholine receptor subunit alpha-4 (627 aa).

The N-terminal stretch at 1–31 (MELGGPGAPPPPLLPPLLLLLGAGFLPASSP) is a signal peptide. Over 32–244 (VETRAHAEER…ITYAFVIRRL (213 aa)) the chain is Extracellular. N59 carries an N-linked (GlcNAc...) asparagine glycan. Ca(2+) contacts are provided by V78 and E80. N-linked (GlcNAc...) asparagine glycans are attached at residues N109 and N176. 2 disulfides stabilise this stretch: C163–C177 and C227–C228. A helical transmembrane segment spans residues 245–269 (PLFYTINLIVPCLLISCLTVLVFYL). A lipid anchor (S-palmitoyl cysteine) is attached at C273. Helical transmembrane passes span 277 to 295 (VTLCISVLLSLTVFLLLIT) and 311 to 332 (YLLFTMVFVTLSIVITVFVLNV). At 333–600 (HHRSPRTHTM…WKYVAMVIDR (268 aa)) the chain is on the cytoplasmic side. The span at 384–399 (PGFWPEPEGEPGVVSG) shows a compositional bias: low complexity. Residues 384–463 (PGFWPEPEGE…PPPSTRAPGL (80 aa)) form a disordered region. S427 is modified (phosphoserine). Positions 444-458 (SPCPLPDSCRPPPST) are enriched in pro residues. S541 bears the Phosphoserine mark. The chain crosses the membrane as a helical span at residues 601–619 (IFLWVFVIVCLLGTAGLFL).

The protein belongs to the ligand-gated ion channel (TC 1.A.9) family. Acetylcholine receptor (TC 1.A.9.1) subfamily. Alpha-4/CHRNA4 sub-subfamily. In terms of assembly, neuronal AChR is composed of two different types of subunits: alpha and beta. CHRNA4 forms heteropentameric neuronal acetylcholine receptors with CHRNB2 and CHRNB4, as well as CHRNA5 and CHRNB3 as accesory subunits. Found in two major stoichiometric forms, LS (low agonist sensitivity): (CHRNA4)3:(CHRNB2)2 and HS (high agonist sensitivity): (CHRNA4)2:(CHRNB2)3, the two stoichiometric forms differ in their unitary conductance, calcium permeability, ACh sensitivity and potentiation by divalent cation. Cells produce predominantly an (CHRNA4)3:(CHRNB2)2 nAChR. The (CHRNA4)2:(CHRNB2)3 expression is selectively up-regulated by nicotine and has lower single channel conductance and calcium permeability. In the striatum, also forms CHRNA4:CHRNA6:CHRNB2 complexes. Also found in the stoichiometric form: (CHRNA4:CHRNB2)2:CHRNB3. Interacts with RIC3; which is required for proper folding and assembly. Interacts with LYPD6.

The protein localises to the synaptic cell membrane. It is found in the cell membrane. It catalyses the reaction Ca(2+)(in) = Ca(2+)(out). The enzyme catalyses K(+)(in) = K(+)(out). It carries out the reaction Na(+)(in) = Na(+)(out). Its activity is regulated as follows. Activated by a myriad of ligands such as acetylcholine, cytisine, nicotine, choline and epibatidine. Channel potentiation by calcium is stoichiometry-selective, CHRNA4:CHRNB2 nACh receptor is achieved by calcium association with topographically distinct sites framed by anionic residues within the CHRNA4 subunit and between the CHRNA4 and CHRNB2 subunits. nAChR activity is inhibited by the antagonist alpha-conotoxins BuIA, PnIA, GID and MII, small disulfide-constrained peptides from cone snails. Functionally, component of neuronal acetylcholine receptors (nAChRs) that function as pentameric, ligand-gated cation channels with high calcium permeability among other activities. nAChRs are excitatory neurotrasnmitter receptors formed by a collection of nAChR subunits known to mediate synaptic transmission in the nervous system and the neuromuscular junction. Each nAchR subunit confers differential attributes to channel properties, including activation, deactivation and desensitization kinetics, pH sensitivity, cation permeability, and binding to allosteric modulators. CHRNA4 forms heteropentameric neuronal acetylcholine receptors with CHRNB2 and CHRNB4, as well as CHRNA5 and CHRNB3 as accesory subunits. Is the most abundant nAChR subtype expressed in the central nervous system. Found in two major stoichiometric forms,(CHRNA4)3:(CHRNB2)2 and (CHRNA4)2:(CHRNB2)3, the two stoichiometric forms differ in their unitary conductance, calcium permeability, ACh sensitivity and potentiation by divalent cation. Involved in the modulation of calcium-dependent signaling pathways, influences the release of neurotransmitters, including dopamine, glutamate and GABA. The sequence is that of Neuronal acetylcholine receptor subunit alpha-4 (CHRNA4) from Mustela putorius furo (European domestic ferret).